Here is a 231-residue protein sequence, read N- to C-terminus: 5'-methylthioadenosine/S-adenosylhomocysteine nucleosidase (231 aa).

E12 serves as the catalytic Proton acceptor. Substrate-binding positions include G78, V153, and M174–E175. D198 functions as the Proton donor in the catalytic mechanism.

It belongs to the PNP/UDP phosphorylase family. MtnN subfamily.

It carries out the reaction S-adenosyl-L-homocysteine + H2O = S-(5-deoxy-D-ribos-5-yl)-L-homocysteine + adenine. The enzyme catalyses S-methyl-5'-thioadenosine + H2O = 5-(methylsulfanyl)-D-ribose + adenine. The catalysed reaction is 5'-deoxyadenosine + H2O = 5-deoxy-D-ribose + adenine. It functions in the pathway amino-acid biosynthesis; L-methionine biosynthesis via salvage pathway; S-methyl-5-thio-alpha-D-ribose 1-phosphate from S-methyl-5'-thioadenosine (hydrolase route): step 1/2. Its function is as follows. Catalyzes the irreversible cleavage of the glycosidic bond in both 5'-methylthioadenosine (MTA) and S-adenosylhomocysteine (SAH/AdoHcy) to adenine and the corresponding thioribose, 5'-methylthioribose and S-ribosylhomocysteine, respectively. Also cleaves 5'-deoxyadenosine, a toxic by-product of radical S-adenosylmethionine (SAM) enzymes, into 5-deoxyribose and adenine. This Vibrio vulnificus (strain CMCP6) protein is 5'-methylthioadenosine/S-adenosylhomocysteine nucleosidase.